The following is a 662-amino-acid chain: Cytochrome bo(3) ubiquinol oxidase subunit 1 (662 aa).

Residues 1 to 14 (MFGKLTFDAIPYHE) lie on the Extracellular side of the membrane. Residues 15-35 (PIIMITYIAIILIALCIASTI) form a helical membrane-spanning segment. Over 36–58 (TYYKKWKYLWYEWFTTVDHKKIS) the chain is Cytoplasmic. A helical membrane pass occupies residues 59 to 79 (IMYGILAFVMLFRGFVDAILM). A ubiquinone is bound by residues Arg-71, Asp-75, and His-98. Topologically, residues 80–106 (RTQQVVASAGFKGFLPPHHYDQIFTAH) are extracellular. His-106 contacts heme b. The helical transmembrane segment at 107–127 (GVIMIFFVAMPLVIGLMNLVI) threads the bilayer. At 128–145 (PLQIGARDVAFPFLNNLS) the chain is on the cytoplasmic side. Residues 146–166 (FWLNVSSAVLLTLSLGIGEFA) traverse the membrane as a helical segment. The Extracellular segment spans residues 167–189 (QTGWLAYPPLSGIKYSSGVGVDY). Trp-170 lines the heme b pocket. Residues 190-210 (WIWSLQISGVGTTLTGINFLV) traverse the membrane as a helical segment. Residues 211-232 (TILKMRAPGMSFFKMPVFTWTS) are Cytoplasmic-facing. Residues 233 to 253 (LCTNILIVISFPVLTVTLVLL) form a helical membrane-spanning segment. The Extracellular segment spans residues 254–277 (TLDRYFNFHFFTNDLGGNAMMYVN). A helical membrane pass occupies residues 278 to 298 (LIWIWGHPEVYILVLPVFGVF). Position 284 (His-284) interacts with Cu(2+). Positions 284-288 (HPEVY) form a cross-link, 1'-histidyl-3'-tyrosine (His-Tyr). Tyr-288 contacts Fe(II)-heme o. At 299-309 (SEVVATFSKKR) the chain is on the cytoplasmic side. The chain crosses the membrane as a helical span at residues 310-330 (LFGYVSLVWATLSITILSFIV). At 331–346 (WLHHFFTMGAGADVNT) the chain is on the extracellular side. 2 residues coordinate Cu(2+): His-333 and His-334. A helical membrane pass occupies residues 347–367 (FFGITTMIIAIPTGVKIFNWL). The Cytoplasmic portion of the chain corresponds to 368-380 (FTIYQGRVHMHSS). A helical transmembrane segment spans residues 381–401 (ILWTLGFLVTFSIGGMTGVLL). At 402-413 (SVPPADFVLHNS) the chain is on the extracellular side. His-411 and His-419 together coordinate Fe(II)-heme o. The chain crosses the membrane as a helical span at residues 414–434 (LFLVAHFHNVIIGGVVFGCFA). His-421 is a binding site for heme b. The Cytoplasmic portion of the chain corresponds to 435–456 (GINYWFPKLFGFVLNEIWGKRA). Residues 457–477 (FWFWIIGFFLAFIPLYFLGLM) traverse the membrane as a helical segment. The Extracellular portion of the chain corresponds to 478 to 493 (GMTRRLSQNIDSEFHM). Heme b-binding residues include Arg-481 and Arg-482. The helical transmembrane segment at 494 to 514 (LLCIAAIGACFIGIGIICQVI) threads the bilayer. Over 515-586 (QFFISIKERR…INSINYHDIH (72 aa)) the chain is Cytoplasmic. The chain crosses the membrane as a helical span at residues 587–607 (MPKNTGLGFMISIFSLFFGFS). Residue Ala-608 is a topological domain, extracellular. A helical membrane pass occupies residues 609–629 (VWHITWLCILSFLAIIISLFI). Residues 630 to 662 (NSLNEDTEYTISAEEIKKIEHQYWKNIQKAGLK) lie on the Cytoplasmic side of the membrane.

The protein belongs to the heme-copper respiratory oxidase family. The cytochrome bo(3) ubiquinol oxidase complex is a heterooctamer of two A chains, two B chains, two C chains and two D chains. The cofactor is Cu(2+). Requires heme b as cofactor. Fe(II)-heme o is required as a cofactor.

It is found in the cell membrane. The enzyme catalyses 2 a ubiquinol + O2 + n H(+)(in) = 2 a ubiquinone + 2 H2O + n H(+)(out). In terms of biological role, cytochrome bo(3) ubiquinol oxidase is the terminal enzyme in the aerobic respiratory chain. Catalyzes the four-electron reduction of O2 to water, using a ubiquinol as a membrane soluble electron donor for molecular oxygen reduction. Has proton pump activity across the membrane in addition to electron transfer, pumping 2 protons/electron and generating a proton motive force. All the redox centers of this enzyme complex are located within the largest subunit, subunit I. Protons are probably pumped via D- and K- channels found in this subunit. This is Cytochrome bo(3) ubiquinol oxidase subunit 1 (cyoB) from Buchnera aphidicola subsp. Acyrthosiphon pisum (strain APS) (Acyrthosiphon pisum symbiotic bacterium).